The primary structure comprises 243 residues: Ribonuclease 3 (243 aa).

Residues 10-146 (INRFRKRFDT…FIGALYLDQG (137 aa)) enclose the RNase III domain. A Mg(2+)-binding site is contributed by E59. Residue D63 is part of the active site. Residues D132 and E135 each coordinate Mg(2+). Residue E135 is part of the active site. Residues 172-241 (DFKTQFQEYV…AESAYKQLKQ (70 aa)) enclose the DRBM domain. Over residues 219–231 (GKGKTKKESEQRA) the composition is skewed to basic and acidic residues. A disordered region spans residues 219-243 (GKGKTKKESEQRAAESAYKQLKQIK).

The protein belongs to the ribonuclease III family. In terms of assembly, homodimer. Requires Mg(2+) as cofactor.

It is found in the cytoplasm. It carries out the reaction Endonucleolytic cleavage to 5'-phosphomonoester.. Functionally, digests double-stranded RNA. Involved in the processing of primary rRNA transcript to yield the immediate precursors to the large and small rRNAs (23S and 16S). Processes some mRNAs, and tRNAs when they are encoded in the rRNA operon. Processes pre-crRNA and tracrRNA of type II CRISPR loci if present in the organism. In Staphylococcus aureus (strain bovine RF122 / ET3-1), this protein is Ribonuclease 3.